Consider the following 113-residue polypeptide: Ribosome-binding factor A (113 aa).

The protein belongs to the RbfA family. Monomer. Binds 30S ribosomal subunits, but not 50S ribosomal subunits or 70S ribosomes.

It is found in the cytoplasm. In terms of biological role, one of several proteins that assist in the late maturation steps of the functional core of the 30S ribosomal subunit. Associates with free 30S ribosomal subunits (but not with 30S subunits that are part of 70S ribosomes or polysomes). Required for efficient processing of 16S rRNA. May interact with the 5'-terminal helix region of 16S rRNA. This chain is Ribosome-binding factor A, found in Mycoplasmopsis agalactiae (strain NCTC 10123 / CIP 59.7 / PG2) (Mycoplasma agalactiae).